The chain runs to 732 residues: Acylamino-acid-releasing enzyme (732 aa).

At Met-1 the chain carries Blocked amino end (Met); alternate. Met-1 carries the post-translational modification N-acetylmethionine; alternate. Phosphoserine is present on residues Ser-185 and Ser-187. Active-site charge relay system residues include Ser-587, Asp-675, and His-707.

It belongs to the peptidase S9C family. Homotetramer.

The protein resides in the cytoplasm. The enzyme catalyses Cleavage of an N-acetyl or N-formyl amino acid from the N-terminus of a polypeptide.. Its activity is regulated as follows. Homotetramerization is required for activity. Tetramerization results in the formation of a gated channel which is involved in substrate selection and substrate access to the catalytic sites. Functionally, this enzyme catalyzes the hydrolysis of the N-terminal peptide bond of an N-acetylated peptide to generate an N-acetylated amino acid and a peptide with a free N-terminus. It preferentially cleaves off Ac-Ala, Ac-Met and Ac-Ser. Also, involved in the degradation of oxidized and glycated proteins. The polypeptide is Acylamino-acid-releasing enzyme (Apeh) (Rattus norvegicus (Rat)).